We begin with the raw amino-acid sequence, 244 residues long: Probable ABC transporter ATP-binding protein in ycf23-apcF intergenic region (244 aa).

The region spanning 9 to 241 is the ABC transporter domain; the sequence is LEINNLTVSY…KLSTLFGEHI (233 aa). 41-48 is a binding site for ATP; sequence GPNGAGKS.

Belongs to the ABC transporter superfamily.

It is found in the plastid. It localises to the cyanelle. This chain is Probable ABC transporter ATP-binding protein in ycf23-apcF intergenic region, found in Cyanophora paradoxa.